An 884-amino-acid chain; its full sequence is Schlafen family member 5 (884 aa).

ATP is bound at residue 574-581; that stretch reads GLPGSGKT.

The protein belongs to the Schlafen family. Subgroup III subfamily.

May have a role in hematopoietic cell differentiation. In Mus musculus (Mouse), this protein is Schlafen family member 5 (Slfn5).